Reading from the N-terminus, the 555-residue chain is Exodeoxyribonuclease 7 large subunit (555 aa).

It belongs to the XseA family. In terms of assembly, heterooligomer composed of large and small subunits.

The protein localises to the cytoplasm. The catalysed reaction is Exonucleolytic cleavage in either 5'- to 3'- or 3'- to 5'-direction to yield nucleoside 5'-phosphates.. In terms of biological role, bidirectionally degrades single-stranded DNA into large acid-insoluble oligonucleotides, which are then degraded further into small acid-soluble oligonucleotides. The chain is Exodeoxyribonuclease 7 large subunit from Chlamydia felis (strain Fe/C-56) (Chlamydophila felis).